A 137-amino-acid polypeptide reads, in one-letter code: Large-conductance mechanosensitive channel (137 aa).

Transmembrane regions (helical) follow at residues 9–29, 32–52, 54–74, and 79–99; these read AFAV…GAAF, IVSS…IGGV, FGDL…VVLA, and IQSI…VKVI.

This sequence belongs to the MscL family. As to quaternary structure, homopentamer.

It localises to the cell inner membrane. Its function is as follows. Channel that opens in response to stretch forces in the membrane lipid bilayer. May participate in the regulation of osmotic pressure changes within the cell. This chain is Large-conductance mechanosensitive channel, found in Pseudomonas fluorescens (strain ATCC BAA-477 / NRRL B-23932 / Pf-5).